The chain runs to 982 residues: MSMAVASLRLLARGGRRRARFPAPLSVPGGRAAFLSGAAEEVAQADAPPPPPPGRKVLESFREEFEIGGRVISFETGKMARFANGSVVISMDDTHVLSTVAAAKSSEPVRDFLPLTVDYQEKQYAQGVIPTTYMRREGAPKERELLCGRIIDRPIRPLFPPGFYHEVQVMNATIIMVNVISSDGKQDPDVMAANASSAALMLSDIPWNGPIGVIRVGRIDGNFVLNPTVDELGLSDLNLVYACSRDKTLMIDVQAREITERDLQAGMKLAHAEAVKCINPQLRLAKRAGKKKKEYKISLISDKSYEKIRTLSEAPIEEVFTDSTYGKFERGEALENITQSVKAKLEEECDEDSLKFLHKAVDTVRKQVIRKRIIEKGLRVDGRQLDEVRPLYCESSTYPILHGSALFSRGDTQVLCTVTLGAPGDAQRLDSIVGPPTKRFMLHYSFPPFSINEVAKRGGLNRREVGHGTLAEKALLAVLPPEGEFPYTVRVNSEVMASDGSTSMASVCGGSMALMDAGIPVREHVAGVSVGLVSEVDQTTGDISSYRILTDILGLEDHLGDMDFKIAGTRRGITAIQLDIKPAGIPLDIICESLEPARKARNQILDRMDQEISSARAFNDGSSPRLATLSFSSDSLRKLLFHRKKIEQETGARVSVSDGTVTIVAKTQPIMDKAIEKVEFLVGREIEVGRTYKGVVSSIKEYGAFVEFNGGQQGLLHISELSHDKVSKVSDVVSVGQVLSLTCIGQDLRGNIKLSLKATLPHAHEKKDLASNHTDPLPSQEVVGWTAVENMPSKDANAEPSISKDEDNMIEETPGCSTPAVIIRSAAECDAQDVTNDPKKKRPKVAKSSPKLSKPASERQEVKRTSAKKTSGASTTAKKNKKEKADSSNDVLDAIPEQNKSNIMNYSSPSNFRSGSMKLGDVVTAKVYQIRAYGLVLELSDGVRGMHKFAENGHKDFEVGEELLVKCSSFNAKGIPVFSLLD.

A mitochondrion-targeting transit peptide spans 1-39 (MSMAVASLRLLARGGRRRARFPAPLSVPGGRAAFLSGAA). The 55-residue stretch at 624-678 (PRLATLSFSSDSLRKLLFHRKKIEQETGARVSVSDGTVTIVAKTQPIMDKAIEKV) folds into the KH domain. One can recognise an S1 motif 1 domain in the interval 689 to 757 (GRTYKGVVSS…LRGNIKLSLK (69 aa)). Disordered regions lie at residues 792 to 814 (PSKD…EETP) and 832 to 892 (QDVT…NDVL). Composition is skewed to low complexity over residues 846-855 (AKSSPKLSKP) and 868-877 (KKTSGASTTA). The region spanning 920–982 (GDVVTAKVYQ…KGIPVFSLLD (63 aa)) is the S1 motif 2 domain.

The protein belongs to the polyribonucleotide nucleotidyltransferase family.

The protein resides in the mitochondrion. The enzyme catalyses RNA(n+1) + phosphate = RNA(n) + a ribonucleoside 5'-diphosphate. Involved in the 3'-end maturation of mitochondrial mRNAs, rRNAs and tRNAs. Functions as a poly(A) mRNA 3'-5' degrading phosphorylase. This chain is Polyribonucleotide nucleotidyltransferase 2, mitochondrial (PNP2), found in Oryza sativa subsp. japonica (Rice).